Consider the following 163-residue polypeptide: Phosphopantetheine adenylyltransferase (163 aa).

Serine 11 lines the substrate pocket. Residues 11–12 and histidine 19 each bind ATP; that span reads SF. 3 residues coordinate substrate: lysine 43, alanine 76, and arginine 90. ATP contacts are provided by residues 91–93, glutamate 101, and 126–132; these read GLR and WQALSSS.

It belongs to the bacterial CoaD family. As to quaternary structure, homohexamer. The cofactor is Mg(2+).

The protein localises to the cytoplasm. The catalysed reaction is (R)-4'-phosphopantetheine + ATP + H(+) = 3'-dephospho-CoA + diphosphate. It functions in the pathway cofactor biosynthesis; coenzyme A biosynthesis; CoA from (R)-pantothenate: step 4/5. Its function is as follows. Reversibly transfers an adenylyl group from ATP to 4'-phosphopantetheine, yielding dephospho-CoA (dPCoA) and pyrophosphate. This chain is Phosphopantetheine adenylyltransferase, found in Streptococcus pyogenes serotype M2 (strain MGAS10270).